The primary structure comprises 225 residues: Phosphatidylserine decarboxylase proenzyme (225 aa).

Ser-188 acts as the Schiff-base intermediate with substrate; via pyruvic acid in catalysis. Pyruvic acid (Ser); by autocatalysis is present on Ser-188.

Belongs to the phosphatidylserine decarboxylase family. PSD-A subfamily. As to quaternary structure, heterodimer of a large membrane-associated beta subunit and a small pyruvoyl-containing alpha subunit. The cofactor is pyruvate. In terms of processing, is synthesized initially as an inactive proenzyme. Formation of the active enzyme involves a self-maturation process in which the active site pyruvoyl group is generated from an internal serine residue via an autocatalytic post-translational modification. Two non-identical subunits are generated from the proenzyme in this reaction, and the pyruvate is formed at the N-terminus of the alpha chain, which is derived from the carboxyl end of the proenzyme. The post-translation cleavage follows an unusual pathway, termed non-hydrolytic serinolysis, in which the side chain hydroxyl group of the serine supplies its oxygen atom to form the C-terminus of the beta chain, while the remainder of the serine residue undergoes an oxidative deamination to produce ammonia and the pyruvoyl prosthetic group on the alpha chain.

Its subcellular location is the cell membrane. It carries out the reaction a 1,2-diacyl-sn-glycero-3-phospho-L-serine + H(+) = a 1,2-diacyl-sn-glycero-3-phosphoethanolamine + CO2. Its pathway is phospholipid metabolism; phosphatidylethanolamine biosynthesis; phosphatidylethanolamine from CDP-diacylglycerol: step 2/2. In terms of biological role, catalyzes the formation of phosphatidylethanolamine (PtdEtn) from phosphatidylserine (PtdSer). This is Phosphatidylserine decarboxylase proenzyme from Parvibaculum lavamentivorans (strain DS-1 / DSM 13023 / NCIMB 13966).